The sequence spans 99 residues: Large ribosomal subunit protein uL23 (99 aa).

This sequence belongs to the universal ribosomal protein uL23 family. As to quaternary structure, part of the 50S ribosomal subunit. Contacts protein L29, and trigger factor when it is bound to the ribosome.

In terms of biological role, one of the early assembly proteins it binds 23S rRNA. One of the proteins that surrounds the polypeptide exit tunnel on the outside of the ribosome. Forms the main docking site for trigger factor binding to the ribosome. This is Large ribosomal subunit protein uL23 from Azotobacter vinelandii (strain DJ / ATCC BAA-1303).